Here is a 618-residue protein sequence, read N- to C-terminus: NAD(P)H-quinone oxidoreductase subunit 5, organellar chromatophore 2 (618 aa).

Transmembrane regions (helical) follow at residues 16-36, 43-63, 99-119, 129-149, 152-172, 190-210, 220-240, 267-287, 291-311, 318-335, 348-368, 390-410, 419-438, 461-481, 495-515, 553-573, and 597-617; these read LIPI…TGWI, TPAY…SLAL, LAAL…ALGY, FFAL…SDSL, SYFL…FWYA, GDVM…GMEF, NTLT…GPIG, SVVV…LHHS, IAVL…VSIA, TLSY…IAIA, AHAI…AVSN, LIAG…CFGL, APWF…LNLT, WQMA…PWMM, AITG…GAIV, IVSG…NGFV, and SYIL…SWLV.

This sequence belongs to the complex I subunit 5 family. As to quaternary structure, NDH is composed of at least 16 different subunits, 5 of which are encoded in the nucleus.

It localises to the plastid. The protein localises to the organellar chromatophore thylakoid membrane. The catalysed reaction is a plastoquinone + NADH + (n+1) H(+)(in) = a plastoquinol + NAD(+) + n H(+)(out). It carries out the reaction a plastoquinone + NADPH + (n+1) H(+)(in) = a plastoquinol + NADP(+) + n H(+)(out). Functionally, NDH shuttles electrons from NAD(P)H:plastoquinone, via FMN and iron-sulfur (Fe-S) centers, to quinones in the photosynthetic chain and possibly in a chloroplast respiratory chain. The immediate electron acceptor for the enzyme in this species is believed to be plastoquinone. Couples the redox reaction to proton translocation, and thus conserves the redox energy in a proton gradient. The sequence is that of NAD(P)H-quinone oxidoreductase subunit 5, organellar chromatophore 2 (ndhF2) from Paulinella chromatophora.